Reading from the N-terminus, the 334-residue chain is L-lactate dehydrogenase B chain (334 aa).

N-acetylalanine is present on Ala2. At Lys7 the chain carries N6-acetyllysine. At Ser44 the chain carries Phosphoserine. NAD(+)-binding positions include 53–58 and Arg100; that span reads DVLEDK. Lys58 is modified (N6-acetyllysine). Arg107 lines the substrate pocket. Lys119 is modified (N6-acetyllysine). Asn139 lines the NAD(+) pocket. Asn139 and Arg170 together coordinate substrate. The Proton acceptor role is filled by His194. Residue Tyr240 is modified to Phosphotyrosine. A substrate-binding site is contributed by Thr249. Lys329 carries the N6-acetyllysine modification.

It belongs to the LDH/MDH superfamily. LDH family. In terms of assembly, homotetramer. Interacts with PTEN upstream reading frame protein MP31; the interaction leads to inhibition of mitochondrial lactate dehydrogenase activity, preventing conversion of lactate to pyruvate in mitochondria.

It localises to the cytoplasm. It is found in the mitochondrion inner membrane. The catalysed reaction is (S)-lactate + NAD(+) = pyruvate + NADH + H(+). Its pathway is fermentation; pyruvate fermentation to lactate; (S)-lactate from pyruvate: step 1/1. Interconverts simultaneously and stereospecifically pyruvate and lactate with concomitant interconversion of NADH and NAD(+). This Monodelphis domestica (Gray short-tailed opossum) protein is L-lactate dehydrogenase B chain (LDHB).